A 484-amino-acid polypeptide reads, in one-letter code: tRNA sulfurtransferase (484 aa).

One can recognise a THUMP domain in the interval 63–167 (REMIERLCCT…DQRLFVVHRQ (105 aa)). ATP-binding positions include 185-186 (LM), lysine 267, glycine 289, and glutamine 298. Cysteine 346 and cysteine 457 are oxidised to a cystine. Positions 405–483 (ALAGQIVLDI…GHANVRVYRP (79 aa)) constitute a Rhodanese domain. The Cysteine persulfide intermediate role is filled by cysteine 457.

Belongs to the ThiI family.

The protein localises to the cytoplasm. It catalyses the reaction [ThiI sulfur-carrier protein]-S-sulfanyl-L-cysteine + a uridine in tRNA + 2 reduced [2Fe-2S]-[ferredoxin] + ATP + H(+) = [ThiI sulfur-carrier protein]-L-cysteine + a 4-thiouridine in tRNA + 2 oxidized [2Fe-2S]-[ferredoxin] + AMP + diphosphate. The enzyme catalyses [ThiS sulfur-carrier protein]-C-terminal Gly-Gly-AMP + S-sulfanyl-L-cysteinyl-[cysteine desulfurase] + AH2 = [ThiS sulfur-carrier protein]-C-terminal-Gly-aminoethanethioate + L-cysteinyl-[cysteine desulfurase] + A + AMP + 2 H(+). Its pathway is cofactor biosynthesis; thiamine diphosphate biosynthesis. Catalyzes the ATP-dependent transfer of a sulfur to tRNA to produce 4-thiouridine in position 8 of tRNAs, which functions as a near-UV photosensor. Also catalyzes the transfer of sulfur to the sulfur carrier protein ThiS, forming ThiS-thiocarboxylate. This is a step in the synthesis of thiazole, in the thiamine biosynthesis pathway. The sulfur is donated as persulfide by IscS. This chain is tRNA sulfurtransferase, found in Azotobacter vinelandii (strain DJ / ATCC BAA-1303).